We begin with the raw amino-acid sequence, 293 residues long: DegV domain-containing protein MG326 homolog (293 aa).

A DegV domain is found at 3-289 (TAIITDSTAS…IDAFSISLLL (287 aa)). Thr-62 and Ser-94 together coordinate hexadecanoate.

Its function is as follows. May bind long-chain fatty acids, such as palmitate, and may play a role in lipid transport or fatty acid metabolism. In Mycoplasma pneumoniae (strain ATCC 29342 / M129 / Subtype 1) (Mycoplasmoides pneumoniae), this protein is DegV domain-containing protein MG326 homolog.